Here is a 1687-residue protein sequence, read N- to C-terminus: A-kinase anchor protein 12 (1687 aa).

The segment at 1–108 (MGAGSSTEQR…EKDRVEEMAA (108 aa)) is disordered. The N-myristoyl glycine moiety is linked to residue G2. 4 positions are modified to phosphoserine: S11, S18, S22, and S27. Over residues 30–48 (GPAAEASGAAGDPADADPA) the composition is skewed to low complexity. Positions 52-62 (PQKNGQLSTVN) are enriched in polar residues. Residues 75–88 (ENQEGQEEEVVDED) are compositionally biased toward acidic residues. Basic and acidic residues predominate over residues 89–105 (VGQRESEDVREKDRVEE). Phosphoserine occurs at positions 136 and 204. 2 disordered regions span residues 175–282 (SDTV…ETTS) and 298–355 (KTSF…DYEK). A compositionally biased stretch (basic and acidic residues) spans 213 to 230 (ASKESELKQSTEKQEGTL). S235 and S245 each carry phosphoserine. Positions 247–259 (QAAEEEAKDEGEE) are enriched in acidic residues. Residues 254–544 (KDEGEEKQEK…QHIHTESPES (291 aa)) form an involved in PKC-binding region. S268, S271, S274, and S304 each carry phosphoserine. Over residues 268-282 (SPESPSSPVSSETTS) the composition is skewed to low complexity. Basic and acidic residues predominate over residues 303 to 321 (KSKEDDLETAEKRKEQEAE). The residue at position 331 (T331) is a Phosphothreonine. Residues 334-344 (ASEEQEPAEDT) are compositionally biased toward acidic residues. 2 positions are modified to phosphoserine: S335 and S350. Position 353 is a phosphotyrosine (Y353). The residue at position 371 (S371) is a Phosphoserine. Residues 402–481 (VEKTEEEQGG…EKTLPKHPEG (80 aa)) are disordered. The span at 417–426 (GGVVVEGTGE) shows a compositional bias: low complexity. Residue S469 is modified to Phosphoserine. A compositionally biased stretch (basic and acidic residues) spans 470-480 (PEEKTLPKHPE). A phosphoserine mark is found at S491, S507, and S509. Residues 496-828 (KVQGSPLKKL…INEDDPDVPA (333 aa)) are disordered. Positions 499-513 (GSPLKKLFSSSGLKK) are enriched in low complexity. Basic residues predominate over residues 514–523 (LSGKKQKGKR). A compositionally biased stretch (basic and acidic residues) spans 533 to 550 (EYQHIHTESPESADEQKG). Phosphoserine occurs at positions 541, 544, 585, 599, 614, and 616. An AKAP CaM-binding 1 motif is present at residues 594 to 614 (ITPWASFKKMVTPKKRVRRPS). Residues 612–626 (RPSESDKEEELEKVK) show a composition bias toward basic and acidic residues. Residues 628 to 639 (ATLSSTDSTVSE) show a composition bias toward polar residues. The residue at position 629 (T629) is a Phosphothreonine. 4 positions are modified to phosphoserine: S631, S632, S635, and S638. Over residues 642–661 (DEVKTVGEEQKPEEPKRRVD) the composition is skewed to basic and acidic residues. 3 positions are modified to phosphoserine: S683, S684, and S685. A compositionally biased stretch (basic and acidic residues) spans 697–711 (DSHRAEEASKDKEAG). A compositionally biased stretch (polar residues) spans 717–726 (ASTQEQDQAQ). Positions 727-744 (GSSSPEPAGSPSEGEGVS) are enriched in low complexity. S736, S748, S770, S771, and S789 each carry phosphoserine. An AKAP CaM-binding 2 motif is present at residues 743–763 (VSTWESFKRLVTPRKKSKSKL). Positions 784–804 (EESWVSIKKFIPGRRKKRADG) match the AKAP CaM-binding 3 motif. Position 871 is a phosphothreonine (T871). S873 bears the Phosphoserine mark. A disordered region spans residues 959–981 (ETSEALRTEEVTEASGAEETTDM). Residue K1030 forms a Glycyl lysine isopeptide (Lys-Gly) (interchain with G-Cter in SUMO1) linkage. Over residues 1035–1045 (VPATQTVQRTG) the composition is skewed to polar residues. Disordered stretches follow at residues 1035-1105 (VPAT…EVTA), 1125-1221 (AVAP…LAAA), 1277-1361 (CQEK…QDKA), and 1443-1487 (TPAP…TAIE). S1059 bears the Phosphoserine mark. A compositionally biased stretch (polar residues) spans 1130–1157 (SSETLTDSETNGSTPLADSDTADGTQQD). Residues 1199–1211 (QEEHGEEPGRDVL) are compositionally biased toward basic and acidic residues. S1289 carries the post-translational modification Phosphoserine. Basic and acidic residues predominate over residues 1298-1310 (DVEKEKRETKPEQ). A phosphoserine mark is found at S1348, S1352, and S1354. Basic and acidic residues predominate over residues 1462 to 1487 (QRERSEEEDKPDAGPDADGKESTAIE). The interval 1498–1511 (ELESKSNKIVLNVI) is RII-binding. Disordered stretches follow at residues 1522 to 1582 (ETAP…GSAS) and 1599 to 1687 (IEKL…LAES). The span at 1530-1547 (YDSQTQVPAMQADSQGAQ) shows a compositional bias: polar residues. 2 positions are modified to phosphoserine: S1543 and S1571. A compositionally biased stretch (low complexity) spans 1618–1630 (QLQSLAQAEASAS). At S1637 the chain carries Phosphoserine. Positions 1645-1687 (LTEEGDAPKVEVQEEEMSTKSVKENKAQAEEDLQEPKGDLAES) are enriched in basic and acidic residues.

As to quaternary structure, binds to dimeric RII-alpha regulatory subunit of PKC. Post-translationally, phosphorylated by PKC (in vitro).

The protein resides in the cytoplasm. Its subcellular location is the cytoskeleton. The protein localises to the membrane. Its function is as follows. Anchoring protein that mediates the subcellular compartmentation of protein kinase A (PKA) and protein kinase C (PKC). This is A-kinase anchor protein 12 (Akap12) from Rattus norvegicus (Rat).